The chain runs to 873 residues: Leucine--tRNA ligase (873 aa).

The short motif at 42–52 (PYPSGKLHMGH) is the 'HIGH' region element. A 'KMSKS' region motif is present at residues 628–632 (KMAKS). Position 631 (Lys631) interacts with ATP.

This sequence belongs to the class-I aminoacyl-tRNA synthetase family.

It is found in the cytoplasm. The enzyme catalyses tRNA(Leu) + L-leucine + ATP = L-leucyl-tRNA(Leu) + AMP + diphosphate. This Aromatoleum aromaticum (strain DSM 19018 / LMG 30748 / EbN1) (Azoarcus sp. (strain EbN1)) protein is Leucine--tRNA ligase.